The primary structure comprises 327 residues: Zinc transport protein ZntB (327 aa).

The Cytoplasmic segment spans residues 1-271 (MESFAGKELQ…AMNRRTYTMS (271 aa)). Residues 272–292 (LLAMVFLPTTFLTGLFGVNLG) form a helical membrane-spanning segment. Over 293–300 (GIPGGDAP) the chain is Periplasmic. The helical transmembrane segment at 301 to 321 (FGFFTFCLMLVILVGGVAWWL) threads the bilayer. At 322 to 327 (KRSKWL) the chain is on the cytoplasmic side.

This sequence belongs to the CorA metal ion transporter (MIT) (TC 1.A.35) family.

Its subcellular location is the cell inner membrane. The catalysed reaction is Zn(2+)(out) + H(+)(out) = Zn(2+)(in) + H(+)(in). Its function is as follows. Zinc transporter. Acts as a Zn(2+):proton symporter, which likely mediates zinc ion uptake. In Pectobacterium atrosepticum (strain SCRI 1043 / ATCC BAA-672) (Erwinia carotovora subsp. atroseptica), this protein is Zinc transport protein ZntB.